The primary structure comprises 78 residues: Keratin-associated protein 6-5 (78 aa).

The tract at residues 3–76 is 25 X 2 AA repeats of G-[YCGS]; the sequence is GYYGNYYGGR…GSGYGSGFGY (74 aa).

Belongs to the KRTAP type 6 family. In terms of assembly, interacts with hair keratins. In terms of tissue distribution, strong expression in narrowly defined pattern restricted to the lower and middle cortical regions of the hair shaft in both developing and cycling hair. During hair follicle regression (catagen), expression levels decrease until expression is no longer detectable in follicles at resting stage (telogen).

Functionally, in the hair cortex, hair keratin intermediate filaments are embedded in an interfilamentous matrix, consisting of hair keratin-associated proteins (KRTAP), which are essential for the formation of a rigid and resistant hair shaft through their extensive disulfide bond cross-linking with abundant cysteine residues of hair keratins. The matrix proteins include the high-sulfur and high-glycine-tyrosine keratins. The sequence is that of Keratin-associated protein 6-5 (Krtap6-5) from Mus musculus (Mouse).